The chain runs to 200 residues: Imidazole glycerol phosphate synthase subunit HisH (200 aa).

One can recognise a Glutamine amidotransferase type-1 domain in the interval 2–200; the sequence is KVAIVEYGVG…LGEVLTGASR (199 aa). Catalysis depends on C79, which acts as the Nucleophile. Residues H179 and E181 contribute to the active site.

In terms of assembly, heterodimer of HisH and HisF.

The protein resides in the cytoplasm. The catalysed reaction is 5-[(5-phospho-1-deoxy-D-ribulos-1-ylimino)methylamino]-1-(5-phospho-beta-D-ribosyl)imidazole-4-carboxamide + L-glutamine = D-erythro-1-(imidazol-4-yl)glycerol 3-phosphate + 5-amino-1-(5-phospho-beta-D-ribosyl)imidazole-4-carboxamide + L-glutamate + H(+). The enzyme catalyses L-glutamine + H2O = L-glutamate + NH4(+). It participates in amino-acid biosynthesis; L-histidine biosynthesis; L-histidine from 5-phospho-alpha-D-ribose 1-diphosphate: step 5/9. In terms of biological role, IGPS catalyzes the conversion of PRFAR and glutamine to IGP, AICAR and glutamate. The HisH subunit catalyzes the hydrolysis of glutamine to glutamate and ammonia as part of the synthesis of IGP and AICAR. The resulting ammonia molecule is channeled to the active site of HisF. The protein is Imidazole glycerol phosphate synthase subunit HisH of Methanopyrus kandleri (strain AV19 / DSM 6324 / JCM 9639 / NBRC 100938).